Consider the following 586-residue polypeptide: Arginine--tRNA ligase (586 aa).

The 'HIGH' region signature appears at 131 to 141; that stretch reads ANPTGPMHVGH.

This sequence belongs to the class-I aminoacyl-tRNA synthetase family. As to quaternary structure, monomer.

The protein resides in the cytoplasm. It catalyses the reaction tRNA(Arg) + L-arginine + ATP = L-arginyl-tRNA(Arg) + AMP + diphosphate. In Rhizobium rhizogenes (strain K84 / ATCC BAA-868) (Agrobacterium radiobacter), this protein is Arginine--tRNA ligase.